The primary structure comprises 204 residues: LexA repressor (204 aa).

Residues 29–49 (VREIGDAVGLMSSSTVHGHLQ) constitute a DNA-binding region (H-T-H motif). Catalysis depends on for autocatalytic cleavage activity residues Ser127 and Lys164.

This sequence belongs to the peptidase S24 family. In terms of assembly, homodimer.

It carries out the reaction Hydrolysis of Ala-|-Gly bond in repressor LexA.. Its function is as follows. Represses a number of genes involved in the response to DNA damage (SOS response), including recA and lexA. In the presence of single-stranded DNA, RecA interacts with LexA causing an autocatalytic cleavage which disrupts the DNA-binding part of LexA, leading to derepression of the SOS regulon and eventually DNA repair. The protein is LexA repressor of Desulfitobacterium hafniense (strain DSM 10664 / DCB-2).